Reading from the N-terminus, the 301-residue chain is Ethylmalonyl-CoA decarboxylase (301 aa).

Lys211 carries the N6-acetyllysine; alternate modification. Lys211 carries the N6-succinyllysine; alternate modification. N6-succinyllysine is present on Lys295.

Belongs to the enoyl-CoA hydratase/isomerase family.

It is found in the cytoplasm. Its subcellular location is the cytosol. It carries out the reaction (2S)-ethylmalonyl-CoA + H(+) = butanoyl-CoA + CO2. It catalyses the reaction (S)-methylmalonyl-CoA + H(+) = propanoyl-CoA + CO2. The catalysed reaction is (2R)-ethylmalonyl-CoA + H(+) = butanoyl-CoA + CO2. Functionally, decarboxylates ethylmalonyl-CoA, a potentially toxic metabolite, to form butyryl-CoA, suggesting it might be involved in metabolite proofreading. Acts preferentially on (S)-ethylmalonyl-CoA but also has some activity on the (R)-isomer. Also has methylmalonyl-CoA decarboxylase activity at lower level. The protein is Ethylmalonyl-CoA decarboxylase (ECHDC1) of Pongo abelii (Sumatran orangutan).